Here is a 500-residue protein sequence, read N- to C-terminus: Glucose-1-phosphate adenylyltransferase large subunit, chloroplastic/amyloplastic (500 aa).

Residues 1 to 33 (RASPPSESRAPLRAPQRSATRQHQARQGPRRMC) constitute a chloroplast transit peptide. Positions 1–47 (RASPPSESRAPLRAPQRSATRQHQARQGPRRMCNGGRGPPYWTAGVT) are disordered.

Belongs to the bacterial/plant glucose-1-phosphate adenylyltransferase family. In terms of assembly, heterotetramer.

It localises to the plastid. The protein localises to the chloroplast. Its subcellular location is the amyloplast. The enzyme catalyses alpha-D-glucose 1-phosphate + ATP + H(+) = ADP-alpha-D-glucose + diphosphate. It participates in glycan biosynthesis; starch biosynthesis. Insensitive to 3'phosphoglycerate and orthophosphate. Its function is as follows. This protein plays a role in synthesis of starch. It catalyzes the synthesis of the activated glycosyl donor, ADP-glucose from Glc-1-P and ATP. This chain is Glucose-1-phosphate adenylyltransferase large subunit, chloroplastic/amyloplastic (AGA.7), found in Triticum aestivum (Wheat).